We begin with the raw amino-acid sequence, 307 residues long: Thioredoxin reductase (307 aa).

36 to 43 (DNAAPGGK) contacts FAD. Cys138 and Cys141 are joined by a disulfide. Residue 278-287 (DIRIKDIRQI) participates in FAD binding.

The protein belongs to the class-II pyridine nucleotide-disulfide oxidoreductase family. In terms of assembly, homodimer. It depends on FAD as a cofactor.

The protein localises to the cytoplasm. It catalyses the reaction [thioredoxin]-dithiol + NADP(+) = [thioredoxin]-disulfide + NADPH + H(+). In Mycoplasmopsis pulmonis (strain UAB CTIP) (Mycoplasma pulmonis), this protein is Thioredoxin reductase (trxB).